Here is a 489-residue protein sequence, read N- to C-terminus: Oxysterol-binding protein-related protein 1B (489 aa).

Belongs to the OSBP family. In terms of tissue distribution, expressed at low levels in flowers.

Its function is as follows. May be involved in the transport of sterols. The polypeptide is Oxysterol-binding protein-related protein 1B (ORP1B) (Arabidopsis thaliana (Mouse-ear cress)).